We begin with the raw amino-acid sequence, 593 residues long: MNSSLKDKLAVLPDKPGCYLMKNASGEIIYVGKAKVLKNRVRSYFTGSHNGKTQLLVSEIVDFEYIVVSSAIEALILECNLIKEHDPRYNVMLRDDKTYPYIKITNEAQPRLEITRKVLKDKAKYFGPYPNAGDASEVKKLLDRLYPLRKCRNMPKQVCLYYHLGQCLAPCVYEVSAEENQRLVDQISQFLDGGHEEMKQTLTEKMLQAAENMEFERAKEYRDQIKSIEAVMEKQKITFTDTIDRDIIGFAVEKGWMCIQVFYMRKGKMIERQTTSFPYYGSETEDFMSYVSQFYYDKQNALPKEILLPQESEPELLAEWLGIKVHAPKRGKKHELVKMATENARIALQEKFALMSKDDARTVQAVHNLGHILGIPVPHRIEAFDNSNIQGTEPVSAMIVFTDGRPDKKEYRKFKIKTVEGPDDYGSMREVVRRRYSRLLKENQPMPDLIVIDGGKGQISAAMDVLENELGLYIPVCGLAKDEKHRTAQLMYGDPPEPVNLRRDSYEFYLLQRIQDEVHRFVITFHRQSRTKTMLSSQLDEIPGIGEKRRKLLFSHFGSLKKMREATVEDFRQLGIGDKLAKEIIGHLRKLDT.

Residues 14 to 91 (DKPGCYLMKN…IKEHDPRYNV (78 aa)) form the GIY-YIG domain. Residues 196–231 (EEMKQTLTEKMLQAAENMEFERAKEYRDQIKSIEAV) form the UVR domain.

Belongs to the UvrC family. As to quaternary structure, interacts with UvrB in an incision complex.

It localises to the cytoplasm. In terms of biological role, the UvrABC repair system catalyzes the recognition and processing of DNA lesions. UvrC both incises the 5' and 3' sides of the lesion. The N-terminal half is responsible for the 3' incision and the C-terminal half is responsible for the 5' incision. This Brevibacillus brevis (strain 47 / JCM 6285 / NBRC 100599) protein is UvrABC system protein C.